The following is a 1098-amino-acid chain: MTQCASRRKSTPSRAILGAFASARGTRWVATIAGLIGFVLSVATPLLPVVQTTAMLDWPQRGQLGSVTAPLISLTPVDFTATVPCDVVRAMPPAGGVVLGTAPKQGKDANLQALFVVVSAQRVDVTDRNVVILSVPREQVTSPQCQRIEVTSTHAGTFANFVGLKDPSGAPLRSGFPDPNLRPQIVGVFTDLTGPAPPGLAVSATIDTRFSTRPTTLKLLAIIGAIVATVVALIALWRLDQLDGRGSIAQLLLRPFRPASSPGGMRRLIPASWRTFTLTDAVVIFGFLLWHVIGANSSDDGYILGMARVADHAGYMSNYFRWFGSPEDPFGWYYNLLALMTHVSDASLWMRLPDLAAGLVCWLLLSREVLPRLGPAVAASKPAYWAAAMVLLTAWMPFNNGLRPEGIIALGSLVTYVLIERSMRYSRLTPAALAVVTAAFTLGVQPTGLIAVAALVAGGRPMLRILVRRHRLVGTLPLVSPMLAAGTVILTVVFADQTLSTVLEATRVRAKIGPSQAWYTENLRYYYLILPTVDGSLSRRFGFLITALCLFTAVFIMLRRKRIPSVARGPAWRLMGVIFGTMFFLMFTPTKWVHHFGLFAAVGAAMAALTTVLVSPSVLRWSRNRMAFLAALFFLLALCWATTNGWWYVSSYGVPFNSAMPKIDGITVSTIFFALFAIAAGYAAWLHFAPRGAGEGRLIRALTTAPVPIVAGFMAAVFVASMVAGIVRQYPTYSNGWSNVRAFVGGCGLADDVLVEPDTNAGFMKPLDGDSGSWGPLGPLGGVNPVGFTPNGVPEHTVAEAIVMKPNQPGTDYDWDAPTKLTSPGINGSTVPLPYGLDPARVPLAGTYTTGAQQQSTLVSAWYLLPKPDDGHPLVVVTAAGKIAGNSVLHGYTPGQTVVLEYAMPGPGALVPAGRMVPDDLYGEQPKAWRNLRFARAKMPADAVAVRVVAEDLSLTPEDWIAVTPPRVPDLRSLQEYVGSTQPVLLDWAVGLAFPCQQPMLHANGIAEIPKFRITPDYSAKKLDTDTWEDGTNGGLLGITDLLLRAHVMATYLSRDWARDWGSLRKFDTLVDAPPAQLELGTATRSGLWSPGKIRIGP.

12 helical membrane passes run 28 to 50, 217 to 239, 271 to 293, 402 to 419, 434 to 456, 472 to 494, 541 to 558, 570 to 587, 597 to 619, 626 to 648, 663 to 685, and 698 to 720; these read WVATIAGLIGFVLSVATPLLPVV, LKLLAIIGAIVATVVALIALWRL, ASWRTFTLTDAVVIFGFLLWHVI, LRPEGIIALGSLVTYVLI, AVVTAAFTLGVQPTGLIAVAALV, LVGTLPLVSPMLAAGTVILTVVF, FGFLITALCLFTAVFIML, PAWRLMGVIFGTMFFLMF, GLFAAVGAAMAALTTVLVSPSVL, MAFLAALFFLLALCWATTNGWWY, IDGITVSTIFFALFAIAAGYAAW, and LIRALTTAPVPIVAGFMAAVFVA.

This sequence belongs to the emb family.

It is found in the cell membrane. Arabinosyl transferase responsible for the polymerization of arabinose into the arabinan of arabinogalactan. This chain is Probable arabinosyltransferase B (embB), found in Mycobacterium bovis (strain ATCC BAA-935 / AF2122/97).